The sequence spans 567 residues: Potassium-transporting ATPase potassium-binding subunit (567 aa).

11 consecutive transmembrane segments (helical) span residues 5 to 25 (GWIQ…PLGF), 64 to 84 (TAYA…LYAL), 136 to 156 (GLTV…IALI), 179 to 199 (LYVL…LGIP), 254 to 274 (ISNL…TNVF), 285 to 305 (WAIL…CYWA), 330 to 350 (FGIA…CGAV), 357 to 376 (FTAL…EVIV), 421 to 441 (MLAI…AVVL), 486 to 506 (ITIG…ALAI), and 529 to 549 (LFVG…FFPA).

The protein belongs to the KdpA family. As to quaternary structure, the system is composed of three essential subunits: KdpA, KdpB and KdpC.

It is found in the cell inner membrane. Part of the high-affinity ATP-driven potassium transport (or Kdp) system, which catalyzes the hydrolysis of ATP coupled with the electrogenic transport of potassium into the cytoplasm. This subunit binds the periplasmic potassium ions and delivers the ions to the membrane domain of KdpB through an intramembrane tunnel. This is Potassium-transporting ATPase potassium-binding subunit from Mesorhizobium japonicum (strain LMG 29417 / CECT 9101 / MAFF 303099) (Mesorhizobium loti (strain MAFF 303099)).